The primary structure comprises 184 residues: NADH-quinone oxidoreductase subunit B (184 aa).

The [4Fe-4S] cluster site is built by Cys-37, Cys-38, Cys-103, and Cys-132.

The protein belongs to the complex I 20 kDa subunit family. NDH-1 is composed of 14 different subunits. Subunits NuoB, C, D, E, F, and G constitute the peripheral sector of the complex. [4Fe-4S] cluster is required as a cofactor.

Its subcellular location is the cell membrane. The enzyme catalyses a quinone + NADH + 5 H(+)(in) = a quinol + NAD(+) + 4 H(+)(out). Functionally, NDH-1 shuttles electrons from NADH, via FMN and iron-sulfur (Fe-S) centers, to quinones in the respiratory chain. The immediate electron acceptor for the enzyme in this species is believed to be a menaquinone. Couples the redox reaction to proton translocation (for every two electrons transferred, four hydrogen ions are translocated across the cytoplasmic membrane), and thus conserves the redox energy in a proton gradient. This chain is NADH-quinone oxidoreductase subunit B, found in Rhodococcus opacus (strain B4).